A 156-amino-acid chain; its full sequence is MNINATLIGQSVAFFIFVLFCMKFVWPPVIAALQERQKKIADGLDAANRAARDLELAHEKAGQQLREAKAQAAEIVEQAKKRANQIVDEARDQARAEGERLKAQAQAEIEQELNSVKDALRAQVGTLAVTGAEKILGASIDANAHEQLVSKLAAEI.

A helical membrane pass occupies residues 12–32 (VAFFIFVLFCMKFVWPPVIAA).

It belongs to the ATPase B chain family. F-type ATPases have 2 components, F(1) - the catalytic core - and F(0) - the membrane proton channel. F(1) has five subunits: alpha(3), beta(3), gamma(1), delta(1), epsilon(1). F(0) has three main subunits: a(1), b(2) and c(10-14). The alpha and beta chains form an alternating ring which encloses part of the gamma chain. F(1) is attached to F(0) by a central stalk formed by the gamma and epsilon chains, while a peripheral stalk is formed by the delta and b chains.

The protein localises to the cell inner membrane. F(1)F(0) ATP synthase produces ATP from ADP in the presence of a proton or sodium gradient. F-type ATPases consist of two structural domains, F(1) containing the extramembraneous catalytic core and F(0) containing the membrane proton channel, linked together by a central stalk and a peripheral stalk. During catalysis, ATP synthesis in the catalytic domain of F(1) is coupled via a rotary mechanism of the central stalk subunits to proton translocation. In terms of biological role, component of the F(0) channel, it forms part of the peripheral stalk, linking F(1) to F(0). The protein is ATP synthase subunit b of Pseudomonas paraeruginosa (strain DSM 24068 / PA7) (Pseudomonas aeruginosa (strain PA7)).